The following is a 361-amino-acid chain: MGSSFGKLFTISTFGESHGGGVGVIIDGCPPRLELDINEIQNDLNRRRPGQSKITTPRNESDEVEILSGLLGNKTLGTPIAMVVRNKDHRPKDYSEIKKTFRPSHADATYQKKYGIQASSGGGRASARETIGRVAAGSVAKQLLTKFAKTEILAWVKRIHDIEAEIHPSEVTFDEIEKNIVRCPNQSAADLMIQRVEAFGKEGDSCGGVIECVVRNPPIGLGMPVFDKLEADLAKALMSLPATKGFEVGSGFGGTYLKGSEHNDPFLPSDSNQLKTATNNSGGIQGGISNGEDIVLRVGFKPTATIRKSQKTIDEDGNAITLKATGRHDPCVLPRAVPMVEAMVALVLADHLLRQRGQCTD.

Position 47 (arginine 47) interacts with NADP(+). Residues 124-126, glycine 286, 301-305, and arginine 327 each bind FMN; these read RAS and KPTAT.

Belongs to the chorismate synthase family. As to quaternary structure, homotetramer. FMNH2 is required as a cofactor.

The enzyme catalyses 5-O-(1-carboxyvinyl)-3-phosphoshikimate = chorismate + phosphate. It functions in the pathway metabolic intermediate biosynthesis; chorismate biosynthesis; chorismate from D-erythrose 4-phosphate and phosphoenolpyruvate: step 7/7. Functionally, catalyzes the anti-1,4-elimination of the C-3 phosphate and the C-6 proR hydrogen from 5-enolpyruvylshikimate-3-phosphate (EPSP) to yield chorismate, which is the branch point compound that serves as the starting substrate for the three terminal pathways of aromatic amino acid biosynthesis. This reaction introduces a second double bond into the aromatic ring system. The polypeptide is Chorismate synthase (Prochlorococcus marinus (strain NATL1A)).